A 440-amino-acid chain; its full sequence is Xaa-Pro dipeptidase (440 aa).

Residues Asp246, Asp257, His337, Glu382, and Glu421 each coordinate Mn(2+).

It belongs to the peptidase M24B family. Bacterial-type prolidase subfamily. The cofactor is Mn(2+).

The enzyme catalyses Xaa-L-Pro dipeptide + H2O = an L-alpha-amino acid + L-proline. Functionally, splits dipeptides with a prolyl residue in the C-terminal position. The polypeptide is Xaa-Pro dipeptidase (Aeromonas hydrophila subsp. hydrophila (strain ATCC 7966 / DSM 30187 / BCRC 13018 / CCUG 14551 / JCM 1027 / KCTC 2358 / NCIMB 9240 / NCTC 8049)).